We begin with the raw amino-acid sequence, 356 residues long: Phosphoserine aminotransferase (356 aa).

Arg-41 lines the L-glutamate pocket. Residues 75-76 (AS), Trp-99, Thr-147, Asp-166, and Gln-189 contribute to the pyridoxal 5'-phosphate site. Position 190 is an N6-(pyridoxal phosphate)lysine (Lys-190). Residue 231–232 (NT) coordinates pyridoxal 5'-phosphate.

Belongs to the class-V pyridoxal-phosphate-dependent aminotransferase family. SerC subfamily. Homodimer. It depends on pyridoxal 5'-phosphate as a cofactor.

Its subcellular location is the cytoplasm. It carries out the reaction O-phospho-L-serine + 2-oxoglutarate = 3-phosphooxypyruvate + L-glutamate. The catalysed reaction is 4-(phosphooxy)-L-threonine + 2-oxoglutarate = (R)-3-hydroxy-2-oxo-4-phosphooxybutanoate + L-glutamate. The protein operates within amino-acid biosynthesis; L-serine biosynthesis; L-serine from 3-phospho-D-glycerate: step 2/3. It participates in cofactor biosynthesis; pyridoxine 5'-phosphate biosynthesis; pyridoxine 5'-phosphate from D-erythrose 4-phosphate: step 3/5. In terms of biological role, catalyzes the reversible conversion of 3-phosphohydroxypyruvate to phosphoserine and of 3-hydroxy-2-oxo-4-phosphonooxybutanoate to phosphohydroxythreonine. The chain is Phosphoserine aminotransferase from Phocaeicola vulgatus (strain ATCC 8482 / DSM 1447 / JCM 5826 / CCUG 4940 / NBRC 14291 / NCTC 11154) (Bacteroides vulgatus).